Consider the following 473-residue polypeptide: Ras-GEF domain-containing family member 1B (473 aa).

Residues 34–164 (HDNNLLSGSL…QMMQCLIRKL (131 aa)) form the N-terminal Ras-GEF domain. In terms of domain architecture, Ras-GEF spans 204 to 452 (NDPYTLAQQL…LYLASYESEG (249 aa)).

As to quaternary structure, interacts with Ras family proteins. Interacts with CCDC124 during cytokinesis.

Its subcellular location is the early endosome. The protein localises to the late endosome. It localises to the midbody. In terms of biological role, guanine nucleotide exchange factor (GEF) with specificity for RAP2A, it doesn't seems to activate other Ras family proteins (in vitro). The sequence is that of Ras-GEF domain-containing family member 1B (RASGEF1B) from Homo sapiens (Human).